Reading from the N-terminus, the 256-residue chain is Ribonuclease 3 (256 aa).

In terms of domain architecture, RNase III spans L3–G125. Residue E38 participates in Mg(2+) binding. Residue D42 is part of the active site. Residues D111 and E114 each coordinate Mg(2+). E114 is an active-site residue. The region spanning D152–R222 is the DRBM domain. Residues L227–E256 are disordered.

It belongs to the ribonuclease III family. Homodimer. Mg(2+) is required as a cofactor.

The protein resides in the cytoplasm. The enzyme catalyses Endonucleolytic cleavage to 5'-phosphomonoester.. Functionally, digests double-stranded RNA. Involved in the processing of primary rRNA transcript to yield the immediate precursors to the large and small rRNAs (23S and 16S). Processes some mRNAs, and tRNAs when they are encoded in the rRNA operon. Processes pre-crRNA and tracrRNA of type II CRISPR loci if present in the organism. The chain is Ribonuclease 3 from Ralstonia nicotianae (strain ATCC BAA-1114 / GMI1000) (Ralstonia solanacearum).